A 143-amino-acid polypeptide reads, in one-letter code: Actin-depolymerizing factor 2 (143 aa).

One can recognise an ADF-H domain in the interval 5–139 (ASGMAVHDDC…GLDVFRSRAG (135 aa)).

Belongs to the actin-binding proteins ADF family.

Actin-depolymerizing protein. Severs actin filaments (F-actin) and binds to actin monomers. In Petunia hybrida (Petunia), this protein is Actin-depolymerizing factor 2 (ADF2).